The sequence spans 135 residues: MAKTFTFELVSPERLLLSEEVEQVVIPGTEGEMTVMAEHAPVMTGIKPGVITVVRAGSEREQFVVFGGFADITPDGCRLLAESATRVKELDRADLARRIEEVRAEVQGARDHETRTKAEEFLGQLTTLEGALLPA.

It belongs to the ATPase epsilon chain family. F-type ATPases have 2 components, CF(1) - the catalytic core - and CF(0) - the membrane proton channel. CF(1) has five subunits: alpha(3), beta(3), gamma(1), delta(1), epsilon(1). CF(0) has three main subunits: a, b and c.

It is found in the cell inner membrane. Its function is as follows. Produces ATP from ADP in the presence of a proton gradient across the membrane. The chain is ATP synthase epsilon chain from Chelativorans sp. (strain BNC1).